The sequence spans 156 residues: MSTAMNKFTQTISKPATILNISDSEESGDEAGVGKVSRTTQSSERWLDLLIEKFQPSLQNITRYINWNFIRICNDRLKKEKMGYIEAKQYVEDMAWMVIASEADSIEWKCIRRQEKVTGVKYPKFFFVQHKEDWIECTGCIPYPGHDLIYDEDDDD.

It belongs to the pneumovirus non-structural protein 2 family.

The protein localises to the host cytoplasm. Functionally, plays a major role in antagonizing the type I IFN-mediated antiviral response. May also inhibit viral transcription and RNA replication. This is Non-structural protein 2 (1B) from Mus musculus (Mouse).